The sequence spans 287 residues: Bifunctional protein FolD (287 aa).

NADP(+) contacts are provided by residues G169–S171 and S194.

Belongs to the tetrahydrofolate dehydrogenase/cyclohydrolase family. Homodimer.

It catalyses the reaction (6R)-5,10-methylene-5,6,7,8-tetrahydrofolate + NADP(+) = (6R)-5,10-methenyltetrahydrofolate + NADPH. The catalysed reaction is (6R)-5,10-methenyltetrahydrofolate + H2O = (6R)-10-formyltetrahydrofolate + H(+). It functions in the pathway one-carbon metabolism; tetrahydrofolate interconversion. Catalyzes the oxidation of 5,10-methylenetetrahydrofolate to 5,10-methenyltetrahydrofolate and then the hydrolysis of 5,10-methenyltetrahydrofolate to 10-formyltetrahydrofolate. This chain is Bifunctional protein FolD, found in Albidiferax ferrireducens (strain ATCC BAA-621 / DSM 15236 / T118) (Rhodoferax ferrireducens).